The following is a 120-amino-acid chain: Large ribosomal subunit protein uL22 (120 aa).

The protein belongs to the universal ribosomal protein uL22 family. Part of the 50S ribosomal subunit.

Functionally, this protein binds specifically to 23S rRNA; its binding is stimulated by other ribosomal proteins, e.g. L4, L17, and L20. It is important during the early stages of 50S assembly. It makes multiple contacts with different domains of the 23S rRNA in the assembled 50S subunit and ribosome. Its function is as follows. The globular domain of the protein is located near the polypeptide exit tunnel on the outside of the subunit, while an extended beta-hairpin is found that lines the wall of the exit tunnel in the center of the 70S ribosome. The protein is Large ribosomal subunit protein uL22 of Acaryochloris marina (strain MBIC 11017).